Consider the following 746-residue polypeptide: Histone-lysine N-methyltransferase EZH2 (746 aa).

Residues M1 to A340 form an interaction with DNMT1, DNMT3A and DNMT3B region. S21 carries the post-translational modification Phosphoserine; by PKB/AKT1. The interaction with EED stretch occupies residues K39–V68. O-linked (GlcNAc) serine glycosylation occurs at S75. S76 carries the phosphoserine modification. The tract at residues Q180 to K222 is disordered. Residues N182–E195 show a composition bias toward acidic residues. Basic and acidic residues predominate over residues R196 to K222. The tract at residues E329–P522 is interaction with CDYL. T339 is modified (phosphothreonine). The tract at residues A340 to P426 is disordered. T345 is modified (phosphothreonine; by CDK1 and CDK2). The segment covering T345–R357 has biased composition (basic residues). A phosphoserine mark is found at S363 and S366. T367 carries the phosphothreonine modification. The segment covering E374–G385 has biased composition (basic and acidic residues). The residue at position 487 (T487) is a Phosphothreonine. A CXC domain is found at C503–S605. The SET domain occupies K612–R727. A Glycyl lysine isopeptide (Lys-Gly) (interchain with G-Cter in SUMO2) cross-link involves residue K634.

Belongs to the class V-like SAM-binding methyltransferase superfamily. Histone-lysine methyltransferase family. EZ subfamily. In terms of assembly, component of the PRC2/EED-EZH2 complex, which includes EED, EZH2, SUZ12, RBBP4 and RBBP7 and possibly AEBP2. The minimum components required for methyltransferase activity of the PRC2/EED-EZH2 complex are EED, EZH2 and SUZ12. The PRC2 complex may also interact with DNMT1, DNMT3A, DNMT3B and PHF1 via the EZH2 subunit and with SIRT1 via the SUZ12 subunit. Interacts with HDAC1 and HDAC2. Binds ATRX via the SET domain. Interacts with PRAME. Interacts with CDYL. Interacts with CLOCK, BMAL1 and CRY1. Interacts with DNMT3L; the interaction is direct. Interacts with EZHIP; the interaction blocks EZH2 methyltransferase activity. Interacts with ZNF263; recruited to the SIX3 promoter along with other proteins involved in chromatin modification and transcriptional corepression where it contributes to transcriptional repression. Interacts with ARMC12. Interacts with ZMYND8; the interaction is dependent on the presence of chromatin. Interacts with DDX18; this interaction inhibits the PRC2 complex. In terms of processing, phosphorylated by AKT1. Phosphorylation by AKT1 reduces methyltransferase activity. Phosphorylation at Thr-345 by CDK1 and CDK2 promotes maintenance of H3K27me3 levels at EZH2-target loci, thus leading to epigenetic gene silencing. Post-translationally, sumoylated. Glycosylated: O-GlcNAcylation at Ser-75 by OGT increases stability of EZH2 and facilitates the formation of H3K27me3 by the PRC2/EED-EZH2 complex. In terms of tissue distribution, in the ovary, expressed in primordial follicles and oocytes and also in external follicle cells (at protein level). Expressed in many tissues. Overexpressed in numerous tumor types including carcinomas of the breast, colon, larynx, lymphoma and testis.

The protein resides in the nucleus. It catalyses the reaction L-lysyl(27)-[histone H3] + 3 S-adenosyl-L-methionine = N(6),N(6),N(6)-trimethyl-L-lysyl(27)-[histone H3] + 3 S-adenosyl-L-homocysteine + 3 H(+). Its function is as follows. Polycomb group (PcG) protein. Catalytic subunit of the PRC2/EED-EZH2 complex, which methylates 'Lys-9' (H3K9me) and 'Lys-27' (H3K27me) of histone H3, leading to transcriptional repression of the affected target gene. Able to mono-, di- and trimethylate 'Lys-27' of histone H3 to form H3K27me1, H3K27me2 and H3K27me3, respectively. Displays a preference for substrates with less methylation, loses activity when progressively more methyl groups are incorporated into H3K27, H3K27me0 &gt; H3K27me1 &gt; H3K27me2. Compared to EZH1-containing complexes, it is more abundant in embryonic stem cells and plays a major role in forming H3K27me3, which is required for embryonic stem cell identity and proper differentiation. The PRC2/EED-EZH2 complex may also serve as a recruiting platform for DNA methyltransferases, thereby linking two epigenetic repression systems. Genes repressed by the PRC2/EED-EZH2 complex include HOXC8, HOXA9, MYT1, CDKN2A and retinoic acid target genes. EZH2 can also methylate non-histone proteins such as the transcription factor GATA4 and the nuclear receptor RORA. Regulates the circadian clock via histone methylation at the promoter of the circadian genes. Essential for the CRY1/2-mediated repression of the transcriptional activation of PER1/2 by the CLOCK-BMAL1 heterodimer; involved in the di and trimethylation of 'Lys-27' of histone H3 on PER1/2 promoters which is necessary for the CRY1/2 proteins to inhibit transcription. The chain is Histone-lysine N-methyltransferase EZH2 from Homo sapiens (Human).